The chain runs to 73 residues: Probable movement protein p8 (73 aa).

Residues 1–12 (MSTVETPAQDTL) show a composition bias toward polar residues. The segment at 1–48 (MSTVETPAQDTLATKEPNKTGAKDRQQARSARLSVAAGAGRTALSQRD) is disordered. Over residues 16 to 27 (EPNKTGAKDRQQ) the composition is skewed to basic and acidic residues.

It belongs to the carmovirus/necrovirus/panicovirus movement protein p8 family.

It is found in the host cell wall. Functionally, cell-to-cell movement. The polypeptide is Probable movement protein p8 (Muhlenbergia (Blackwell switchgrass)).